A 1006-amino-acid chain; its full sequence is GATA zinc finger domain-containing protein 7 (1006 aa).

The segment covering 55–70 (SSSNNFINNHHNNQSS) has biased composition (low complexity). Disordered stretches follow at residues 55–116 (SSSN…APNL), 128–248 (PFQN…DPFY), 381–499 (NAKK…PLST), 528–638 (STSG…SSNS), and 657–800 (YNSN…NYHD). Polar residues predominate over residues 71–86 (DIHSISQSTPNLSTLI). 2 stretches are compositionally biased toward low complexity: residues 87-110 (SSSS…NSSS) and 128-158 (PFQN…CNNS). A compositionally biased stretch (polar residues) spans 159–168 (PVSSSTNYIP). Residues 169-180 (NNSTSNVVLNSS) show a composition bias toward low complexity. The segment covering 181–190 (IPTTSPNVLS) has biased composition (polar residues). Low complexity-rich tracts occupy residues 205 to 241 (NNNN…NNNN) and 388 to 410 (TNTN…NNNN). The span at 411–426 (IQQANVNTSPISTSTT) shows a compositional bias: polar residues. 2 stretches are compositionally biased toward low complexity: residues 427-456 (PNNN…QQAQ) and 468-496 (SITP…GASP). The segment covering 528–539 (STSGMLSTTNPY) has biased composition (polar residues). Positions 540–557 (THHSPNTSSTVSSSVTSP) are enriched in low complexity. Polar residues predominate over residues 558-589 (LINQYGTNPTLTNNHSFYGSLASNQNTGASDG). Composition is skewed to low complexity over residues 590 to 601 (NNNNNNNNNNNN) and 619 to 638 (SSNP…SSNS). A compositionally biased stretch (polar residues) spans 662 to 680 (GSGMTTPQSLGHSPSHNDY). 2 stretches are compositionally biased toward low complexity: residues 681–706 (NSNN…NSNN) and 713–785 (SNSS…SSNN). The GATA-type zinc finger occupies 842-867 (CHNCGTKNTPEWRRGPSGPATLCNAC). Residues 925–957 (NNASSSSSSSSSSSSSSSSSSSTSSYSSSSYNI) form a disordered region. Low complexity predominate over residues 928–954 (SSSSSSSSSSSSSSSSSSSTSSYSSSS).

The sequence is that of GATA zinc finger domain-containing protein 7 (gtaG) from Dictyostelium discoideum (Social amoeba).